The chain runs to 118 residues: Large ribosomal subunit protein bL20 (118 aa).

It belongs to the bacterial ribosomal protein bL20 family.

Its function is as follows. Binds directly to 23S ribosomal RNA and is necessary for the in vitro assembly process of the 50S ribosomal subunit. It is not involved in the protein synthesizing functions of that subunit. This is Large ribosomal subunit protein bL20 from Lactobacillus delbrueckii subsp. bulgaricus (strain ATCC BAA-365 / Lb-18).